The sequence spans 211 residues: Pyridoxine/pyridoxamine 5'-phosphate oxidase (211 aa).

Substrate-binding positions include 7–10 and lysine 65; that span reads RRDY. FMN-binding positions include 60–65, 75–76, arginine 81, lysine 82, and glutamine 104; these read RIVLLK and YT. Residues tyrosine 122, arginine 126, and serine 130 each coordinate substrate. Residues 139 to 140 and tryptophan 184 contribute to the FMN site; that span reads QS. 190-192 is a substrate binding site; that stretch reads RLH. Arginine 194 provides a ligand contact to FMN.

The protein belongs to the pyridoxamine 5'-phosphate oxidase family. In terms of assembly, homodimer. Requires FMN as cofactor.

It carries out the reaction pyridoxamine 5'-phosphate + O2 + H2O = pyridoxal 5'-phosphate + H2O2 + NH4(+). It catalyses the reaction pyridoxine 5'-phosphate + O2 = pyridoxal 5'-phosphate + H2O2. The protein operates within cofactor metabolism; pyridoxal 5'-phosphate salvage; pyridoxal 5'-phosphate from pyridoxamine 5'-phosphate: step 1/1. It functions in the pathway cofactor metabolism; pyridoxal 5'-phosphate salvage; pyridoxal 5'-phosphate from pyridoxine 5'-phosphate: step 1/1. Its function is as follows. Catalyzes the oxidation of either pyridoxine 5'-phosphate (PNP) or pyridoxamine 5'-phosphate (PMP) into pyridoxal 5'-phosphate (PLP). The protein is Pyridoxine/pyridoxamine 5'-phosphate oxidase of Aliivibrio fischeri (strain ATCC 700601 / ES114) (Vibrio fischeri).